We begin with the raw amino-acid sequence, 320 residues long: Glutathione synthetase (320 aa).

One can recognise an ATP-grasp domain in the interval 133–317 (KMYTLQFAAV…LGEKVICWLE (185 aa)). Residue 159-215 (LEEHGAAVLKPLGGKAGEGILFLDPGDRNFNSLVEISTQHGKEPVMVQRFLPEAKEG) coordinates ATP. 2 residues coordinate Mg(2+): E288 and N290.

It belongs to the prokaryotic GSH synthase family. The cofactor is Mg(2+). Mn(2+) is required as a cofactor.

It carries out the reaction gamma-L-glutamyl-L-cysteine + glycine + ATP = glutathione + ADP + phosphate + H(+). Its pathway is sulfur metabolism; glutathione biosynthesis; glutathione from L-cysteine and L-glutamate: step 2/2. This chain is Glutathione synthetase, found in Synechocystis sp. (strain ATCC 27184 / PCC 6803 / Kazusa).